A 175-amino-acid chain; its full sequence is Large ribosomal subunit protein uL10 (175 aa).

The protein belongs to the universal ribosomal protein uL10 family. As to quaternary structure, part of the ribosomal stalk of the 50S ribosomal subunit. The N-terminus interacts with L11 and the large rRNA to form the base of the stalk. The C-terminus forms an elongated spine to which L12 dimers bind in a sequential fashion forming a multimeric L10(L12)X complex.

In terms of biological role, forms part of the ribosomal stalk, playing a central role in the interaction of the ribosome with GTP-bound translation factors. The protein is Large ribosomal subunit protein uL10 of Prochlorococcus marinus (strain MIT 9515).